Consider the following 374-residue polypeptide: Lipid-A-disaccharide synthase (374 aa).

It belongs to the LpxB family.

The catalysed reaction is a lipid X + a UDP-2-N,3-O-bis[(3R)-3-hydroxyacyl]-alpha-D-glucosamine = a lipid A disaccharide + UDP + H(+). The protein operates within bacterial outer membrane biogenesis; LPS lipid A biosynthesis. Functionally, condensation of UDP-2,3-diacylglucosamine and 2,3-diacylglucosamine-1-phosphate to form lipid A disaccharide, a precursor of lipid A, a phosphorylated glycolipid that anchors the lipopolysaccharide to the outer membrane of the cell. The protein is Lipid-A-disaccharide synthase of Pseudomonas fluorescens (strain ATCC BAA-477 / NRRL B-23932 / Pf-5).